The primary structure comprises 1063 residues: Error-prone DNA polymerase (1063 aa).

This sequence belongs to the DNA polymerase type-C family. DnaE2 subfamily.

It is found in the cytoplasm. It catalyses the reaction DNA(n) + a 2'-deoxyribonucleoside 5'-triphosphate = DNA(n+1) + diphosphate. DNA polymerase involved in damage-induced mutagenesis and translesion synthesis (TLS). It is not the major replicative DNA polymerase. In Burkholderia mallei (strain ATCC 23344), this protein is Error-prone DNA polymerase.